The following is a 344-amino-acid chain: Protein pelota homolog (344 aa).

It belongs to the eukaryotic release factor 1 family. Pelota subfamily. As to quaternary structure, monomer. A divalent metal cation serves as cofactor.

The protein resides in the cytoplasm. Functionally, may function in recognizing stalled ribosomes, interact with stem-loop structures in stalled mRNA molecules, and effect endonucleolytic cleavage of the mRNA. May play a role in the release non-functional ribosomes and degradation of damaged mRNAs. Has endoribonuclease activity. The sequence is that of Protein pelota homolog from Saccharolobus islandicus (strain M.14.25 / Kamchatka #1) (Sulfolobus islandicus).